A 291-amino-acid chain; its full sequence is Ribosomal RNA small subunit methyltransferase A (291 aa).

Positions 29, 31, 56, 77, 102, and 127 each coordinate S-adenosyl-L-methionine.

Belongs to the class I-like SAM-binding methyltransferase superfamily. rRNA adenine N(6)-methyltransferase family. RsmA subfamily.

The protein resides in the cytoplasm. It catalyses the reaction adenosine(1518)/adenosine(1519) in 16S rRNA + 4 S-adenosyl-L-methionine = N(6)-dimethyladenosine(1518)/N(6)-dimethyladenosine(1519) in 16S rRNA + 4 S-adenosyl-L-homocysteine + 4 H(+). Specifically dimethylates two adjacent adenosines (A1518 and A1519) in the loop of a conserved hairpin near the 3'-end of 16S rRNA in the 30S particle. May play a critical role in biogenesis of 30S subunits. In Geobacillus sp. (strain WCH70), this protein is Ribosomal RNA small subunit methyltransferase A.